Here is a 139-residue protein sequence, read N- to C-terminus: uncharacterized protein (139 aa).

This is an uncharacterized protein from Dictyostelium discoideum (Social amoeba).